The sequence spans 27 residues: Potassium channel toxin alpha-KTx 9.11 (27 aa).

3 cysteine pairs are disulfide-bonded: Cys3-Cys19, Cys6-Cys23, and Cys10-Cys25.

It belongs to the short scorpion toxin superfamily. Potassium channel inhibitor family. Alpha-KTx 09 subfamily. Expressed by the venom gland.

Its subcellular location is the secreted. Functionally, may play a role in blocking voltage-gated potassium channels Kv1.2/KCNA2, Kv1.3/KCNA3 and Kv1.6/KCNA6 to a lesser extent. This Mesobuthus gibbosus (Mediterranean checkered scorpion) protein is Potassium channel toxin alpha-KTx 9.11.